Consider the following 175-residue polypeptide: NAD(P)H-quinone oxidoreductase subunit J (175 aa).

The protein belongs to the complex I 30 kDa subunit family. In terms of assembly, NDH-1 can be composed of about 15 different subunits; different subcomplexes with different compositions have been identified which probably have different functions.

It localises to the cellular thylakoid membrane. It carries out the reaction a plastoquinone + NADH + (n+1) H(+)(in) = a plastoquinol + NAD(+) + n H(+)(out). It catalyses the reaction a plastoquinone + NADPH + (n+1) H(+)(in) = a plastoquinol + NADP(+) + n H(+)(out). Its function is as follows. NDH-1 shuttles electrons from an unknown electron donor, via FMN and iron-sulfur (Fe-S) centers, to quinones in the respiratory and/or the photosynthetic chain. The immediate electron acceptor for the enzyme in this species is believed to be plastoquinone. Couples the redox reaction to proton translocation, and thus conserves the redox energy in a proton gradient. Cyanobacterial NDH-1 also plays a role in inorganic carbon-concentration. This chain is NAD(P)H-quinone oxidoreductase subunit J, found in Nostoc sp. (strain PCC 7120 / SAG 25.82 / UTEX 2576).